Here is a 346-residue protein sequence, read N- to C-terminus: 3-isopropylmalate dehydrogenase (346 aa).

NAD(+) is bound at residue 76 to 87 (GPQWTDPNNRPE). 4 residues coordinate substrate: Arg94, Arg104, Arg132, and Asp217. Positions 217, 241, and 245 each coordinate Mg(2+). 275-287 (GSAPDIANQNLAN) is an NAD(+) binding site.

The protein belongs to the isocitrate and isopropylmalate dehydrogenases family. LeuB type 1 subfamily. As to quaternary structure, homodimer. It depends on Mg(2+) as a cofactor. Mn(2+) serves as cofactor.

It is found in the cytoplasm. The catalysed reaction is (2R,3S)-3-isopropylmalate + NAD(+) = 4-methyl-2-oxopentanoate + CO2 + NADH. Its pathway is amino-acid biosynthesis; L-leucine biosynthesis; L-leucine from 3-methyl-2-oxobutanoate: step 3/4. Its function is as follows. Catalyzes the oxidation of 3-carboxy-2-hydroxy-4-methylpentanoate (3-isopropylmalate) to 3-carboxy-4-methyl-2-oxopentanoate. The product decarboxylates to 4-methyl-2 oxopentanoate. This chain is 3-isopropylmalate dehydrogenase, found in Staphylococcus haemolyticus (strain JCSC1435).